The chain runs to 88 residues: Large ribosomal subunit protein bL27 (88 aa).

Positions 1-24 (MATKKSGGSSGNGRDSRGRRLGVK) are disordered.

It belongs to the bacterial ribosomal protein bL27 family.

This Ehrlichia canis (strain Jake) protein is Large ribosomal subunit protein bL27.